We begin with the raw amino-acid sequence, 292 residues long: 33 kDa chaperonin (292 aa).

2 disulfides stabilise this stretch: Cys-230–Cys-232 and Cys-263–Cys-266.

Belongs to the HSP33 family. Under oxidizing conditions two disulfide bonds are formed involving the reactive cysteines. Under reducing conditions zinc is bound to the reactive cysteines and the protein is inactive.

Its subcellular location is the cytoplasm. Functionally, redox regulated molecular chaperone. Protects both thermally unfolding and oxidatively damaged proteins from irreversible aggregation. Plays an important role in the bacterial defense system toward oxidative stress. This is 33 kDa chaperonin from Salmonella choleraesuis (strain SC-B67).